A 121-amino-acid chain; its full sequence is Dihydroneopterin aldolase (121 aa).

Substrate contacts are provided by residues glutamate 22, tyrosine 54, and 73–74 (LE). Catalysis depends on lysine 100, which acts as the Proton donor/acceptor.

The protein belongs to the DHNA family. In terms of assembly, homooctamer. Four molecules assemble into a ring, and two rings come together to give a cylinder with a hole of at least 13 a diameter.

The enzyme catalyses 7,8-dihydroneopterin = 6-hydroxymethyl-7,8-dihydropterin + glycolaldehyde. It catalyses the reaction 7,8-dihydroneopterin = 7,8-dihydromonapterin. It functions in the pathway cofactor biosynthesis; tetrahydrofolate biosynthesis; 2-amino-4-hydroxy-6-hydroxymethyl-7,8-dihydropteridine diphosphate from 7,8-dihydroneopterin triphosphate: step 3/4. Its function is as follows. Catalyzes the conversion of 7,8-dihydroneopterin to 6-hydroxymethyl-7,8-dihydropterin. Can also catalyze the epimerization of carbon 2' of dihydroneopterin to dihydromonapterin. This Staphylococcus aureus (strain MRSA252) protein is Dihydroneopterin aldolase (folB).